A 184-amino-acid chain; its full sequence is ADP-ribosylation factor-like protein 2 (184 aa).

Residue glycine 2 is the site of N-myristoyl glycine attachment. GTP is bound by residues 23 to 30 (GLDNAGKT), 66 to 70 (DVGGQ), glycine 68, and 125 to 128 (NKSD).

It belongs to the small GTPase superfamily. Arf family.

The protein resides in the cytoplasm. Its subcellular location is the cell membrane. It localises to the cytoskeleton. It is found in the microtubule organizing center. The protein localises to the centrosome. Its function is as follows. GTP-binding protein that functions in embryogenesis, cytokinesis, germline development and microtubulule cytoskeleton dynamics. The protein is ADP-ribosylation factor-like protein 2 (evl-20.1) of Caenorhabditis briggsae.